Reading from the N-terminus, the 85-residue chain is Conotoxin Lv15a (85 aa).

The signal sequence occupies residues 1–23 (MEKLTVLILVATVLLMIQVLAQS). A propeptide spanning residues 24–49 (GGDKHLKRRPKQYATKRLSALMRGHR) is cleaved from the precursor. The residue at position 50 (glutamine 50) is a Pyrrolidone carboxylic acid.

This sequence belongs to the conotoxin O2 superfamily. Post-translationally, contains 4 disulfide bonds. As to expression, expressed by the venom duct.

The protein resides in the secreted. The sequence is that of Conotoxin Lv15a from Conus lividus (Livid cone).